The sequence spans 857 residues: Elongation factor 2 (857 aa).

Residues 17-362 (ANIRNMSVIA…MITIHLPSPV (346 aa)) enclose the tr-type G domain. A GTP-binding site is contributed by 26-33 (AHVDHGKS). Threonine 54, threonine 57, and threonine 59 each carry phosphothreonine. The residue at position 152 (lysine 152) is an N6-succinyllysine. GTP contacts are provided by residues 158-161 (NKMD) and 216-218 (SGL). Position 235 is an N6-acetyllysine (lysine 235). Residue lysine 239 is modified to N6-acetyllysine; alternate. Lysine 239 participates in a covalent cross-link: Glycyl lysine isopeptide (Lys-Gly) (interchain with G-Cter in SUMO1); alternate. Tyrosine 265 carries the post-translational modification Phosphotyrosine. An N6-acetyllysine; alternate modification is found at lysine 272. Lysine 272 is modified (N6-succinyllysine; alternate). An N6-acetyllysine modification is found at lysine 275. Lysine 322 participates in a covalent cross-link: Glycyl lysine isopeptide (Lys-Gly) (interchain with G-Cter in SUMO). Serine 325 bears the Phosphoserine mark. Residue tyrosine 373 is modified to Phosphotyrosine. Threonine 435 carries the phosphothreonine modification. 2 positions are modified to N6-acetyllysine: lysine 439 and lysine 445. A Phosphoserine modification is found at serine 502. Lysine 525 carries the N6,N6,N6-trimethyllysine modification. Lysine 529 participates in a covalent cross-link: Glycyl lysine isopeptide (Lys-Gly) (interchain with G-Cter in SUMO). Residue lysine 572 is modified to N6-succinyllysine. The residue at position 595 (serine 595) is a Phosphoserine. Lysine 619 is modified (N6-acetyllysine). A Diphthamide modification is found at histidine 715.

Belongs to the GTP-binding elongation factor family. EF-G/EF-2 subfamily. In terms of assembly, binds to 80S ribosomes. Actively translating ribosomes show mutually exclusive binding of eIF5a (EIF5A or EIF5A2) and EEF2/eEF2. Interacts with SERBP1; interaction sequesters EEF2/eEF2 at the A-site of the ribosome, thereby blocking the interaction sites of the mRNA-tRNA complex, promoting ribosome stabilization and hibernation. Interacts with HABP4; interaction takes place at the A-site of hibernating ribosomes and promotes ribosome stabilization. Component of the mRNA surveillance SURF complex, at least composed of ERF1, ERF3 (ERF3A or ERF3B), EEF2, UPF1/RENT1, SMG1, SMG8 and SMG9. Interacts with RBPMS2. Post-translationally, phosphorylation by EF-2 kinase completely inactivates EF-2; it requires prior phosphorylation by CDK2 at Ser-595 during mitotic prometaphase. Phosphorylation by CSK promotes SUMOylation, proteolytic cleavage, and nuclear translocation if the C-terminal fragment. In terms of processing, diphthamide is 2-[3-carboxyamido-3-(trimethyl-ammonio)propyl]histidine. ISGylated. Post-translationally, proteolytically processed at two sites following phosphorylation by CSK. In terms of processing, SUMOylated following phosphorylation by CSK, promotes proteolytic cleavage.

It localises to the cytoplasm. The protein localises to the nucleus. It carries out the reaction GTP + H2O = GDP + phosphate + H(+). Its function is as follows. Catalyzes the GTP-dependent ribosomal translocation step during translation elongation. During this step, the ribosome changes from the pre-translocational (PRE) to the post-translocational (POST) state as the newly formed A-site-bound peptidyl-tRNA and P-site-bound deacylated tRNA move to the P and E sites, respectively. Catalyzes the coordinated movement of the two tRNA molecules, the mRNA and conformational changes in the ribosome. The polypeptide is Elongation factor 2 (EEF2) (Oryctolagus cuniculus (Rabbit)).